The chain runs to 211 residues: Thymidylate kinase (211 aa).

An ATP-binding site is contributed by 12-19; sequence GIDGSGKS.

The protein belongs to the thymidylate kinase family.

The enzyme catalyses dTMP + ATP = dTDP + ADP. Its function is as follows. Phosphorylation of dTMP to form dTDP in both de novo and salvage pathways of dTTP synthesis. The chain is Thymidylate kinase from Ruegeria pomeroyi (strain ATCC 700808 / DSM 15171 / DSS-3) (Silicibacter pomeroyi).